The following is a 150-amino-acid chain: Catabolic 3-dehydroquinase 2 (150 aa).

The active-site Proton acceptor is the Y23. Substrate-binding residues include N74, H80, and D87. Residue H100 is the Proton donor of the active site. Substrate contacts are provided by residues 101–102 (IT) and R111.

Belongs to the type-II 3-dehydroquinase family. Homododecamer. Adopts a ring-like structure, composed of an arrangement of two hexameric rings stacked on top of one another.

The enzyme catalyses 3-dehydroquinate = 3-dehydroshikimate + H2O. Its pathway is aromatic compound metabolism; 3,4-dihydroxybenzoate biosynthesis; 3,4-dihydroxybenzoate from 3-dehydroquinate: step 1/2. In terms of biological role, is involved in the catabolism of quinate. Allows the utilization of quinate as carbon source via the beta-ketoadipate pathway. The polypeptide is Catabolic 3-dehydroquinase 2 (Neosartorya fischeri (strain ATCC 1020 / DSM 3700 / CBS 544.65 / FGSC A1164 / JCM 1740 / NRRL 181 / WB 181) (Aspergillus fischerianus)).